Here is a 1025-residue protein sequence, read N- to C-terminus: Exportin-T (1025 aa).

It belongs to the exportin family.

It is found in the nucleus. The protein resides in the cytoplasm. Its function is as follows. tRNA nucleus export receptor which facilitates tRNA translocation across the nuclear pore complex. Involved in pre-tRNA splicing, probably by affecting the interaction of pre-tRNA with splicing endonuclease. The protein is Exportin-T (LOS1) of Yarrowia lipolytica (strain CLIB 122 / E 150) (Yeast).